We begin with the raw amino-acid sequence, 291 residues long: Protein/nucleic acid deglycase HchA (291 aa).

Basic and acidic residues predominate over residues Met-1–His-18. Positions Met-1–Ala-20 are disordered. Cys-188 functions as the Nucleophile in the catalytic mechanism.

It belongs to the peptidase C56 family. HchA subfamily.

Its subcellular location is the cytoplasm. The catalysed reaction is N(omega)-(1-hydroxy-2-oxopropyl)-L-arginyl-[protein] + H2O = lactate + L-arginyl-[protein] + H(+). The enzyme catalyses N(6)-(1-hydroxy-2-oxopropyl)-L-lysyl-[protein] + H2O = lactate + L-lysyl-[protein] + H(+). It catalyses the reaction S-(1-hydroxy-2-oxopropyl)-L-cysteinyl-[protein] + H2O = lactate + L-cysteinyl-[protein] + H(+). It carries out the reaction N(omega)-(1-hydroxy-2-oxoethyl)-L-arginyl-[protein] + H2O = L-arginyl-[protein] + glycolate + H(+). The catalysed reaction is N(6)-(1-hydroxy-2-oxoethyl)-L-lysyl-[protein] + H2O = glycolate + L-lysyl-[protein] + H(+). The enzyme catalyses S-(1-hydroxy-2-oxoethyl)-L-cysteinyl-[protein] + H2O = glycolate + L-cysteinyl-[protein] + H(+). It catalyses the reaction N(2)-(1-hydroxy-2-oxopropyl)-dGTP + H2O = lactate + dGTP + H(+). It carries out the reaction N(2)-(1-hydroxy-2-oxopropyl)-GTP + H2O = lactate + GTP + H(+). The catalysed reaction is N(2)-(1-hydroxy-2-oxopropyl)-GDP + H2O = lactate + GDP + H(+). The enzyme catalyses N(2)-(1-hydroxy-2-oxopropyl)-GMP + H2O = lactate + GMP + H(+). It catalyses the reaction N(2)-(1-hydroxy-2-oxoethyl)-dGTP + H2O = dGTP + glycolate + H(+). It carries out the reaction N(2)-(1-hydroxy-2-oxoethyl)-GTP + H2O = glycolate + GTP + H(+). The catalysed reaction is N(2)-(1-hydroxy-2-oxoethyl)-GDP + H2O = glycolate + GDP + H(+). The enzyme catalyses N(2)-(1-hydroxy-2-oxoethyl)-GMP + H2O = glycolate + GMP + H(+). It catalyses the reaction an N(2)-(1-hydroxy-2-oxopropyl)-guanosine in RNA + H2O = a guanosine in RNA + lactate + H(+). It carries out the reaction an N(2)-(1-hydroxy-2-oxopropyl)-2'-deoxyguanosine in DNA + H2O = a 2'-deoxyguanosine in DNA + lactate + H(+). The catalysed reaction is an N(2)-(1-hydroxy-2-oxoethyl)-guanosine in RNA + H2O = a guanosine in RNA + glycolate + H(+). The enzyme catalyses an N(2)-(1-hydroxy-2-oxoethyl)-2'-deoxyguanosine in DNA + H2O = a 2'-deoxyguanosine in DNA + glycolate + H(+). Functionally, protein and nucleotide deglycase that catalyzes the deglycation of the Maillard adducts formed between amino groups of proteins or nucleotides and reactive carbonyl groups of glyoxals. Thus, functions as a protein deglycase that repairs methylglyoxal- and glyoxal-glycated proteins, and releases repaired proteins and lactate or glycolate, respectively. Deglycates cysteine, arginine and lysine residues in proteins, and thus reactivates these proteins by reversing glycation by glyoxals. Acts on early glycation intermediates (hemithioacetals and aminocarbinols), preventing the formation of Schiff bases and advanced glycation endproducts (AGE). Also functions as a nucleotide deglycase able to repair glycated guanine in the free nucleotide pool (GTP, GDP, GMP, dGTP) and in DNA and RNA. Is thus involved in a major nucleotide repair system named guanine glycation repair (GG repair), dedicated to reversing methylglyoxal and glyoxal damage via nucleotide sanitization and direct nucleic acid repair. Plays an important role in protecting cells from carbonyl stress. The protein is Protein/nucleic acid deglycase HchA of Pseudomonas aeruginosa (strain LESB58).